A 338-amino-acid polypeptide reads, in one-letter code: uncharacterized protein (338 aa).

An N-terminal signal peptide occupies residues 1-29; the sequence is MIKQLYKNITICSLAISTALTVFPATSYA.

This sequence belongs to the aerolysin family.

This is an uncharacterized protein from Staphylococcus aureus (strain Mu50 / ATCC 700699).